A 202-amino-acid polypeptide reads, in one-letter code: Na(+)-translocating NADH-quinone reductase subunit E (202 aa).

The next 6 membrane-spanning stretches (helical) occupy residues 11–31 (SVFI…FLAV), 35–55 (VTTA…SVPA), 79–99 (LSFL…QILE), 114–134 (GIFL…AFMV), 144–164 (LVFG…LAAV), and 180–200 (LGIT…FSGV).

The protein belongs to the NqrDE/RnfAE family. Composed of six subunits; NqrA, NqrB, NqrC, NqrD, NqrE and NqrF.

The protein localises to the cell inner membrane. It carries out the reaction a ubiquinone + n Na(+)(in) + NADH + H(+) = a ubiquinol + n Na(+)(out) + NAD(+). In terms of biological role, NQR complex catalyzes the reduction of ubiquinone-1 to ubiquinol by two successive reactions, coupled with the transport of Na(+) ions from the cytoplasm to the periplasm. NqrA to NqrE are probably involved in the second step, the conversion of ubisemiquinone to ubiquinol. In Shewanella denitrificans (strain OS217 / ATCC BAA-1090 / DSM 15013), this protein is Na(+)-translocating NADH-quinone reductase subunit E.